The chain runs to 150 residues: Large ribosomal subunit protein uL11 (150 aa).

The protein belongs to the universal ribosomal protein uL11 family. In terms of assembly, part of the ribosomal stalk of the 50S ribosomal subunit. Interacts with L10 and the large rRNA to form the base of the stalk. L10 forms an elongated spine to which L12 dimers bind in a sequential fashion forming a multimeric L10(L12)X complex. Post-translationally, one or more lysine residues are methylated.

Forms part of the ribosomal stalk which helps the ribosome interact with GTP-bound translation factors. The protein is Large ribosomal subunit protein uL11 of Ureaplasma parvum serovar 3 (strain ATCC 27815 / 27 / NCTC 11736).